Here is a 283-residue protein sequence, read N- to C-terminus: Adenylate dimethylallyltransferase (283 aa).

The protein belongs to the isopentenyl transferase family.

The enzyme catalyses dimethylallyl diphosphate + AMP = N(6)-(dimethylallyl)adenosine 5'-phosphate + diphosphate. In terms of biological role, transfers dimethylallyl groups to AMP as part of the biosynthesis of cytokinin phytohormones like isopentenyl adenine or discadenine which controle spore formation and viability. In Dictyostelium discoideum (Social amoeba), this protein is Adenylate dimethylallyltransferase (iptA).